Here is a 778-residue protein sequence, read N- to C-terminus: Ent-sandaracopimaradiene synthase KSL3, chloroplastic (778 aa).

A chloroplast-targeting transit peptide spans M1–V35. Residues D527, E531, N670, D671, and D678 each coordinate Mg(2+). A DDXXD motif motif is present at residues D527–E531.

Belongs to the terpene synthase family. It depends on Mg(2+) as a cofactor.

It is found in the plastid. The protein localises to the chloroplast. It carries out the reaction ent-copalyl diphosphate = ent-sandaracopimara-8(14),15-diene + diphosphate. The enzyme catalyses ent-copalyl diphosphate = ent-(12E)-labda-8(17),12,14-triene + diphosphate. It functions in the pathway secondary metabolite biosynthesis; terpenoid biosynthesis. Diterpene cyclase involved in the biosynthesis of labdane-related diterpenoids (LRDs) natural products. Catalyzes the cyclization of ent-CDP into ent-sandaracopimaradiene as a major, and ent-pimaradiene and ent-labdatriene as minor products. The protein is Ent-sandaracopimaradiene synthase KSL3, chloroplastic of Ricinus communis (Castor bean).